Here is a 212-residue protein sequence, read N- to C-terminus: Uracil phosphoribosyltransferase (212 aa).

5-phospho-alpha-D-ribose 1-diphosphate contacts are provided by residues Arg-78, Arg-103, and 130–138 (DPMLATGSS). Uracil contacts are provided by residues Ile-193 and 198–200 (GDA). Asp-199 contributes to the 5-phospho-alpha-D-ribose 1-diphosphate binding site.

Belongs to the UPRTase family. Mg(2+) serves as cofactor.

The catalysed reaction is UMP + diphosphate = 5-phospho-alpha-D-ribose 1-diphosphate + uracil. It participates in pyrimidine metabolism; UMP biosynthesis via salvage pathway; UMP from uracil: step 1/1. With respect to regulation, allosterically activated by GTP. Catalyzes the conversion of uracil and 5-phospho-alpha-D-ribose 1-diphosphate (PRPP) to UMP and diphosphate. The protein is Uracil phosphoribosyltransferase of Pseudomonas syringae pv. tomato (strain ATCC BAA-871 / DC3000).